Reading from the N-terminus, the 87-residue chain is NADH-ubiquinone oxidoreductase chain 4L (87 aa).

2 helical membrane passes run 22-42 and 49-69; these read FLSF…FIIG and LFLI…SLLV.

The protein belongs to the complex I subunit 4L family.

The protein resides in the mitochondrion membrane. It carries out the reaction a ubiquinone + NADH + 5 H(+)(in) = a ubiquinol + NAD(+) + 4 H(+)(out). Functionally, core subunit of the mitochondrial membrane respiratory chain NADH dehydrogenase (Complex I) that is believed to belong to the minimal assembly required for catalysis. Complex I functions in the transfer of electrons from NADH to the respiratory chain. The immediate electron acceptor for the enzyme is believed to be ubiquinone. The protein is NADH-ubiquinone oxidoreductase chain 4L (ND4L) of Apis mellifera ligustica (Common honeybee).